A 1392-amino-acid polypeptide reads, in one-letter code: DNA-directed RNA polymerase subunit beta (1392 aa).

Belongs to the RNA polymerase beta chain family. The RNAP catalytic core consists of 2 alpha, 1 beta, 1 beta' and 1 omega subunit. When a sigma factor is associated with the core the holoenzyme is formed, which can initiate transcription.

It catalyses the reaction RNA(n) + a ribonucleoside 5'-triphosphate = RNA(n+1) + diphosphate. In terms of biological role, DNA-dependent RNA polymerase catalyzes the transcription of DNA into RNA using the four ribonucleoside triphosphates as substrates. This Neisseria meningitidis serogroup A / serotype 4A (strain DSM 15465 / Z2491) protein is DNA-directed RNA polymerase subunit beta.